Consider the following 438-residue polypeptide: Na(+)/H(+) antiporter NhaA (438 aa).

The next 11 helical transmembrane spans lie at 23-43, 62-82, 104-124, 133-153, 162-182, 185-205, 221-241, 302-322, 337-357, 372-392, and 410-430; these read FGGIFLFLNAVLAMVVANSFL, FFIGFSLHNWIDDVLMALFFL, SFPVIAAIGGMIAPGLIYFFL, GFGIPMATDIAFALGVIMLLG, VFLITLAVADDLGAIVVIALF, TNLKFAWLLGALGVVLILAVL, VLLWFCVHQSGIHATIAAVIL, FLAPISGYFIMPLFAFANAGV, LGVILGLCLGKPLGIFLITFI, WWHILGAGLLAGIGFTMSMFI, and IAILLGSLISGIIGALYLFAL.

The protein belongs to the NhaA Na(+)/H(+) (TC 2.A.33) antiporter family.

Its subcellular location is the cell inner membrane. It catalyses the reaction Na(+)(in) + 2 H(+)(out) = Na(+)(out) + 2 H(+)(in). Na(+)/H(+) antiporter that extrudes sodium in exchange for external protons. The protein is Na(+)/H(+) antiporter NhaA of Helicobacter pylori (strain HPAG1).